We begin with the raw amino-acid sequence, 74 residues long: Conotoxin Vt11.7 (74 aa).

Residues 1-26 (MMFRLTSVGCFLLVIVLLNVAVLTNA) form the signal peptide. Cystine bridges form between C28-C42, C35-C47, C41-C51, and C46-C55. A propeptide spanning residues 62–74 (AHGHGLLRFWGQR) is cleaved from the precursor.

It belongs to the conotoxin I2 superfamily. In terms of tissue distribution, expressed by the venom duct.

Its subcellular location is the secreted. In Conus planorbis (Planorbis cone), this protein is Conotoxin Vt11.7.